A 461-amino-acid polypeptide reads, in one-letter code: Alkaline phosphatase 4 (461 aa).

The signal sequence occupies residues 1–41; it reads MKKMSLFQNMKSKLLPIAAVSVLTAGIFAGAELQQTEKASA. Asp58 provides a ligand contact to Mg(2+). A Zn(2+)-binding site is contributed by Asp58. The Phosphoserine intermediate role is filled by Ser108. 2 residues coordinate Mg(2+): Thr161 and Glu282. 5 residues coordinate Zn(2+): Asp287, His291, Asp329, His330, and His423.

This sequence belongs to the alkaline phosphatase family. Monomer. Mg(2+) is required as a cofactor. The cofactor is Zn(2+).

It carries out the reaction a phosphate monoester + H2O = an alcohol + phosphate. The sequence is that of Alkaline phosphatase 4 (phoA) from Bacillus subtilis (strain 168).